Reading from the N-terminus, the 255-residue chain is Phosphatidylcholine synthase (255 aa).

Topologically, residues 1–13 (MNPIKPPFTLNQY) are cytoplasmic. Residues 14–34 (FAAWFVHVFTASAACIGVFSL) traverse the membrane as a helical segment. Over 35–42 (YKIYQHDY) the chain is Periplasmic. The chain crosses the membrane as a helical span at residues 43 to 63 (VFALWLMAITVFIDAVDGSLA). The Cytoplasmic portion of the chain corresponds to 64 to 76 (RLVHVKSVLPKID). A helical transmembrane segment spans residues 77–97 (GALLDNIVDYLNYVITPCFFL). Residues 98–103 (LVKPGM) are Periplasmic-facing. Residues 104 to 124 (LPADYVVPITAAITITSAYQF) traverse the membrane as a helical segment. Topologically, residues 125-133 (CQDDAKTPD) are cytoplasmic. Residues 134–154 (HFFKGFPCYWNITVFYMYIFN) form a helical membrane-spanning segment. A topological domain (periplasmic) is located at residue Thr155. The helical transmembrane segment at 156-175 (SMIVNTVLLSLFCVLIFIPV) threads the bilayer. Residues 176-190 (KYVYPSRLDYLTESR) are Cytoplasmic-facing. The chain crosses the membrane as a helical span at residues 191 to 211 (VLKILMHCCSALYGISSFCLL). Over 212–217 (VNYPET) the chain is Periplasmic. A helical membrane pass occupies residues 218 to 238 (NKLWVSLSLGYVGMYLFLSFY). The Cytoplasmic portion of the chain corresponds to 239–255 (RTYYPMFKAKITANNKD).

It belongs to the CDP-alcohol phosphatidyltransferase class-I family. It depends on Mn(2+) as a cofactor.

Its subcellular location is the cell inner membrane. It carries out the reaction a CDP-1,2-diacyl-sn-glycerol + choline = a 1,2-diacyl-sn-glycero-3-phosphocholine + CMP + H(+). Its function is as follows. Condenses choline with CDP-diglyceride to produce phosphatidylcholine and CMP. Affects virulence of this bacterium when there is a complete loss of phosphatidylcholine formation due to absence of both the synthase (pcs) and the methylation (pmtA) pathways. Reduced virulence results from lowered yields of bacteria within host macrophages and because of loss of high multiplicity cytotoxicity. The polypeptide is Phosphatidylcholine synthase (Legionella pneumophila subsp. pneumophila (strain Philadelphia 1 / ATCC 33152 / DSM 7513)).